The sequence spans 481 residues: Protein hedgehog (481 aa).

Positions 1–19 (MDNQAVSALWSCASATCLS) are cleaved as a signal peptide. Residues 20 to 90 (LDAKRHSIEP…LALNFRHAHS (71 aa)) constitute a propeptide that is removed on maturation. The tract at residues 26-56 (SIEPNPDGQASPDVNNNNNNHNKSTTTVDAH) is disordered. Cys91 carries the N-palmitoyl cysteine lipid modification. Glu155, Glu156, Asp161, Thr191, Glu192, Asp195, and Asp197 together coordinate Ca(2+). Gly264 carries the Cholesterol glycine ester lipid modification.

The protein belongs to the hedgehog family. Interacts with shf. Post-translationally, the C-terminal part of the hedgehog protein precursor displays an autoproteolysis activity that results in the cleavage of the full-length protein into two parts (N-product and C-product). In addition, the C-terminal part displays a cholesterol transferase activity that results by the covalent attachment of a cholesterol moiety to the C-terminal of the newly generated N-product. The N-product is the active species in both local and long-range signaling, whereas the C-product has no signaling activity. In terms of processing, cholesterylation is required for N-product targeting to lipid rafts and multimerization. N-palmitoylation by Rasp of the hedgehog N-product, within the secretory pathway, is required for the embryonic and larval patterning activities of the hedgehog signal.

It is found in the nucleus. It localises to the cytoplasm. The protein resides in the cell membrane. The catalysed reaction is glycyl-L-cysteinyl-[protein] + cholesterol + H(+) = [protein]-C-terminal glycyl cholesterol ester + N-terminal L-cysteinyl-[protein]. Functionally, the C-terminal part of the hedgehog protein precursor displays an autoproteolysis activity that results in the cleavage of the full-length protein into two parts (N-product and C-product). In addition, the C-terminal part displays a cholesterol transferase activity that results by the covalent attachment of a cholesterol moiety to the C-terminal of the newly generated N-product. Once cleaved, the C-product has no signaling activity and diffuses from the cell. The dually lipidated hedgehog protein N-product is a morphogen which is essential for a variety of patterning events during development. Establishes the anterior-posterior axis of the embryonic segments and patterns the larval imaginal disks. Binds to the patched (ptc) receptor, which functions in association with smoothened (smo), to activate the transcription of target genes wingless (wg), decapentaplegic (dpp) and ptc. In the absence of hh, ptc represses the constitutive signaling activity of smo through fused (fu). Essential component of a signaling pathway which regulates the Duox-dependent gut immune response to bacterial uracil; required to activate Cad99C-dependent endosome formation, norpA-dependent Ca2+ mobilization and p38 MAPK, which are essential steps in the Duox-dependent production of reactive oxygen species (ROS) in response to intestinal bacterial infection. During photoreceptor differentiation, it up-regulates transcription of Ubr3, which in turn promotes the hh-signaling pathway by mediating the ubiquitination and degradation of cos. In Drosophila hydei (Fruit fly), this protein is Protein hedgehog.